The primary structure comprises 419 residues: Tyrosine--tRNA ligase (419 aa).

Residue Tyr36 participates in L-tyrosine binding. The 'HIGH' region signature appears at 41–50; it reads PTGDSMHIGH. 2 residues coordinate L-tyrosine: Tyr168 and Gln172. Residues 230 to 234 carry the 'KMSKS' region motif; that stretch reads KFGKT. An ATP-binding site is contributed by Lys233. The 68-residue stretch at 352 to 419 folds into the S4 RNA-binding domain; it reads KNIVDFLVDA…KKKYFLARVK (68 aa).

It belongs to the class-I aminoacyl-tRNA synthetase family. TyrS type 1 subfamily. As to quaternary structure, homodimer.

The protein localises to the cytoplasm. The enzyme catalyses tRNA(Tyr) + L-tyrosine + ATP = L-tyrosyl-tRNA(Tyr) + AMP + diphosphate + H(+). In terms of biological role, catalyzes the attachment of tyrosine to tRNA(Tyr) in a two-step reaction: tyrosine is first activated by ATP to form Tyr-AMP and then transferred to the acceptor end of tRNA(Tyr). The sequence is that of Tyrosine--tRNA ligase from Latilactobacillus sakei subsp. sakei (strain 23K) (Lactobacillus sakei subsp. sakei).